The following is a 505-amino-acid chain: Lysine--tRNA ligase (505 aa).

Mg(2+) is bound by residues Glu415 and Glu422.

The protein belongs to the class-II aminoacyl-tRNA synthetase family. As to quaternary structure, homodimer. Requires Mg(2+) as cofactor.

The protein localises to the cytoplasm. The enzyme catalyses tRNA(Lys) + L-lysine + ATP = L-lysyl-tRNA(Lys) + AMP + diphosphate. This Shigella dysenteriae serotype 1 (strain Sd197) protein is Lysine--tRNA ligase.